The following is a 647-amino-acid chain: Leucine-rich repeat transmembrane protein FLRT3 (647 aa).

The signal sequence occupies residues 1 to 28; it reads MITVPWSVFLIWTKIGLLLDMAPYSVAA. The Extracellular portion of the chain corresponds to 29–526; the sequence is KPCPSVCRCD…KEPYKNSSVP (498 aa). The LRRNT domain maps to 30–62; the sequence is PCPSVCRCDVGFIYCNDRDLTSIPTGIPEDATN. Disulfide bonds link Cys-31/Cys-37 and Cys-35/Cys-44. LRR repeat units follow at residues 58–82, 83–105, 107–126, 127–152, 154–179, 181–197, 198–223, 225–246, 247–269, and 270–293; these read EDAT…LKNL, RRVE…LPKY, KELH…SLSQ, IPYL…AFRD, IYLR…TIEE, RLDD…SLQD, LTNL…VFMN, VNLT…NLPG, TNLR…AFSY, and LRQL…VFDD. An N-linked (GlcNAc...) asparagine glycan is attached at Asn-226. The LRRCT domain maps to 305 to 356; that stretch reads NPWHCGCKMKWVRDWLQSLPLKVNVRGLMCQAPEKVRGMAIKDLNAELFDCK. Cys-309 and Cys-334 are disulfide-bonded. The Fibronectin type-III domain occupies 404–502; the sequence is PVRKIITIFV…ECIETETAPL (99 aa). The helical transmembrane segment at 527–547 threads the bilayer; the sequence is LAAIIGGAVALVALALLALVC. Residues 548–647 lie on the Cytoplasmic side of the membrane; it reads WYVHRNGALF…GIPDSDHSHS (100 aa). The disordered stretch occupies residues 620–647; it reads LYKNSHSESSSNRSYRDSGIPDSDHSHS.

N-glycosylated. Post-translationally, proteolytic cleavage in the juxtamembrane region gives rise to a soluble ectodomain. Cleavage is probably effected by a metalloprotease.

The protein resides in the cell membrane. Its subcellular location is the endoplasmic reticulum membrane. The protein localises to the cell junction. It localises to the focal adhesion. It is found in the secreted. The protein resides in the cell projection. Its subcellular location is the axon. The protein localises to the growth cone membrane. Functionally, modulates the structure and function of the apical ectodermal ridge (AER) that controls embryonic limb development. Functions in cell-cell adhesion, cell migration and axon guidance, exerting an attractive or repulsive role depending on its interaction partners. Plays a role in the spatial organization of brain neurons. Plays a role in vascular development. Plays a role in cell-cell adhesion via its interaction with latrophilins that are expressed at the surface of adjacent cells. Mediates axon attraction towards cells expressing NTN1. Mediates axon growth cone collapse and plays a repulsive role in neuron guidance via its interaction with UNC-5 family members. Plays a role in the regulation of the density of glutamaergic synapses. Plays a role in fibroblast growth factor-mediated signaling cascades. Required for normal morphogenesis during embryonic development, but not for normal embryonic patterning. The chain is Leucine-rich repeat transmembrane protein FLRT3 (FLRT3) from Gallus gallus (Chicken).